Reading from the N-terminus, the 309-residue chain is Low-density lipoprotein receptor-related protein 1 (309 aa).

Belongs to the LDLR family.

Its subcellular location is the endoplasmic reticulum. The protein resides in the golgi apparatus. It localises to the endosome. Involved in endocytosis, fatty acid beta-oxidation and infectious growth. Plays a critical role in the accumulation of MSN2 from the cytosol to the nucleus by activating the cyclic AMP signaling pathway. MSN2 can then target the dienoyl-coenzyme A isomerase DCI1 and other genes involved in fatty acid beta-oxidation, which is important for lipid droplets degradation and infectious growth. The polypeptide is Low-density lipoprotein receptor-related protein 1 (Pyricularia oryzae (strain 70-15 / ATCC MYA-4617 / FGSC 8958) (Rice blast fungus)).